Here is a 153-residue protein sequence, read N- to C-terminus: uncharacterized protein (153 aa).

The next 2 membrane-spanning stretches (helical) occupy residues 16–36 and 97–117; these read ILACLLLIFLMATIFLLILEI and ALTTTLSIILLVCIIMACIIC.

Its subcellular location is the membrane. This is an uncharacterized protein from Human herpesvirus 6A (strain Uganda-1102) (HHV-6 variant A).